The following is a 541-amino-acid chain: Circadian clock oscillator protein KaiC (541 aa).

Residues 1–40 (MNQSLGPSEPEKPQDNTAEDSTEPTPDNHRADLSELRGIP) are disordered. KaiC domains follow at residues 21 to 268 (STEP…INIF) and 282 to 541 (VRVS…EEGL). Residues 26-35 (PDNHRADLSE) are compositionally biased toward basic and acidic residues. ATP is bound by residues Gly-70, Thr-71, Gly-72, Lys-73, Thr-74, Leu-75, Ser-110, Lys-245, Leu-246, Arg-247, Thr-249, His-251, Thr-261, Thr-311, Gly-312, Thr-313, Gly-314, Lys-315, and Thr-316. Thr-74 contacts Mg(2+). Thr-316 and Glu-339 together coordinate Mg(2+). Position 352 (Trp-352) interacts with ATP. Ser-452 is modified (phosphoserine; by autocatalysis). Thr-453 carries the phosphothreonine; by autocatalysis modification. 7 residues coordinate ATP: Arg-472, Lys-478, Met-479, Arg-480, Ser-482, His-484, and Lys-486.

Belongs to the KaiC family. In terms of assembly, homohexamer; hexamerization is dependent on ATP-binding. The KaiABC complex composition changes during the circadian cycle to control KaiC phosphorylation. Complexes KaiC(6), KaiA(2-4):KaiC(6), KaiB(6):KaiC(6) and KaiC(6):KaiB(6):KaiA(12) are among the most important forms, many form cooperatively. KaiC interacts with SasA, activating its autokinase function and leading to RpaA activation. Mg(2+) serves as cofactor. Phosphorylated on serine and threonine residues by autocatalysis. Has a 4 step phosphorylation cycle; the autokinase acts first on Thr-453, then Ser-452. When Ser-452 is modified KaiC switches to an autophosphatase mode, acting first on phospho-Thr-453 then phospho-Ser-452.

It catalyses the reaction L-seryl-[protein] + ATP = O-phospho-L-seryl-[protein] + ADP + H(+). It carries out the reaction L-threonyl-[protein] + ATP = O-phospho-L-threonyl-[protein] + ADP + H(+). The catalysed reaction is ATP + H2O = ADP + phosphate + H(+). With respect to regulation, the interaction with KaiA enhances its phosphorylation status, while the interaction with KaiB decreases it. Central component of the KaiABC oscillator complex, which constitutes the main circadian regulator in cyanobacteria. Complex composition changes during the circadian cycle to control KaiC phosphorylation. KaiA stimulates KaiC autophosphorylation, while KaiB sequesters KaiA, leading to KaiC autodephosphorylation. Clock output pathways impact the RpaA transcriptional regulator. KaiC enhances the autophosphorylation activity of SasA, which then transfers its phosphate group to RpaA to activate it. KaiB and KaiC together enhance the phospho-RpaA dephosphatase activity of CikA. Its function is as follows. Has a weak, temperature-independent ATPase activity; ATPase activity defines the circadian period. The phosphorylation state of KaiC modulates its ATPase activity and effects KaiB binding. This is Circadian clock oscillator protein KaiC from Parathermosynechococcus lividus (Thermostichus lividus).